A 74-amino-acid polypeptide reads, in one-letter code: Conotoxin Im6.10 (74 aa).

The signal sequence occupies residues 1 to 19; the sequence is MKTGMIICLLLIAFMDADG. A propeptide spanning residues 20-47 is cleaved from the precursor; it reads SPGDTLYSQKTADTDSGMKRFQKTFQKR. 3 disulfides stabilise this stretch: Cys49–Cys58, Cys52–Cys63, and Cys57–Cys73.

In terms of tissue distribution, expressed by the venom duct.

It localises to the secreted. In terms of biological role, probable neurotoxin. In Conus imperialis (Imperial cone), this protein is Conotoxin Im6.10.